We begin with the raw amino-acid sequence, 46 residues long: Antimicrobial peptide eNAP-1 (46 aa).

2 cysteine pairs are disulfide-bonded: cysteine 4-cysteine 16 and cysteine 10-cysteine 26.

Belongs to the granulin family.

It is found in the secreted. In terms of biological role, has antimicrobial activity against Gram-negative and Gram-positive bacteria. This chain is Antimicrobial peptide eNAP-1, found in Equus caballus (Horse).